A 464-amino-acid chain; its full sequence is Centrosomal protein of 55 kDa (464 aa).

The segment covering 1-11 has biased composition (basic and acidic residues); that stretch reads MSSRSTKDLIK. The disordered stretch occupies residues 1 to 26; it reads MSSRSTKDLIKSKWGSKPSNSKSETT. Coiled-coil stretches lie at residues 22 to 186, 238 to 337, and 374 to 403; these read KSET…QWLV, NDLL…FLYT, and QHQLHVILKELRKARNQITQLESLKQLHEF. Serine 96 carries the post-translational modification Phosphoserine. Positions 157–236 are interaction with TSG101; that stretch reads PNCFNSSINN…GYLQEEKQKC (80 aa). The interval 160–214 is interaction with PDCD6IP; sequence FNSSINNIHEMEIQLKDALEKNQQWLVYDQQREVYVKGLLAKIFELEKKTETAAH. A required for localization to the interphase centrosome and to the midbody during cytokinesis region spans residues 355-464; the sequence is QMQACTLDFE…LLVHVEYCSK (110 aa). Serine 425 and serine 428 each carry phosphoserine; by CDK1 and MAPK1. Threonine 430 bears the Phosphothreonine mark. Position 436 is a phosphoserine; by PLK1 (serine 436).

As to quaternary structure, homodimer. Interacts (phosphorylated on Ser-425 and Ser-428) with PLK1; the interaction is indirect via the MTMR3:MTMR4 heterooligomer, occurs during early mitosis, regulates the phosphorylation of CEP55 by PLK1 and its recruitment to the midbody where it can mediate cell abscission. Interacts with AKAP9/CG-NAP; the interaction occurs in interphase and is lost upon mitotic entry. Interacts with PCNT/Kendrin; the interaction occurs in interphase and is lost upon mitotic entry. Directly interacts with PDCD6IP; this interaction is required for PDCD6IP targeting to the midbody; CEP55 binds PDCD6IP in a 2:1 stoichiometry; PDCD6IP competes with TSG101 for the same binding site. Interacts with TSG101; TSG101 competes with PDCD6IP for the same binding site; interaction is required for cytokinesis but not for viral budding. Interacts with MVB12A, VPS37B, VPS37C and VPS28. Post-translationally, there is a hierachy of phosphorylation, where both Ser-425 and Ser-428 are phosphorylated at the onset of mitosis, prior to Ser-436. Phosphorylation at Ser-425 and Ser-428 is required for dissociation from the centrosome at the G2/M boundary. Phosphorylation at the 3 sites, Ser-425, Ser-428 and Ser-436, is required for protein function at the final stages of cell division to complete cytokinesis successfully. Expressed in embryonic brain. Expressed in fetal brain ganglionic eminence, kidney tubules and multinucleate neurons in the temporal cortex. Expressed in adult brain, cerebellum, kidney tubules, intestine and muscles (at protein level). Widely expressed, mostly in proliferative tissues. Highly expressed in testis. Intermediate levels in adult and fetal thymus, as well as in various cancer cell lines. Low levels in different parts of the digestive tract, bone marrow, lymph nodes, placenta, fetal heart and fetal spleen. Hardly detected in brain.

Its subcellular location is the cytoplasm. The protein resides in the cytoskeleton. It localises to the microtubule organizing center. It is found in the centrosome. The protein localises to the centriole. Its subcellular location is the cleavage furrow. The protein resides in the midbody. It localises to the midbody ring. Plays a role in mitotic exit and cytokinesis. Recruits PDCD6IP and TSG101 to midbody during cytokinesis. Required for successful completion of cytokinesis. Not required for microtubule nucleation. Plays a role in the development of the brain and kidney. This Homo sapiens (Human) protein is Centrosomal protein of 55 kDa.